The following is a 242-amino-acid chain: Small ribosomal subunit protein uS3 (242 aa).

The KH type-2 domain occupies 39-110 (IRRFIHKKYG…QVRINVVEVE (72 aa)). The disordered stretch occupies residues 217–242 (TMPVGASPRRRGNRRPQQFEDRSNEG). A compositionally biased stretch (basic and acidic residues) spans 233–242 (QQFEDRSNEG).

This sequence belongs to the universal ribosomal protein uS3 family. Part of the 30S ribosomal subunit. Forms a tight complex with proteins S10 and S14.

Functionally, binds the lower part of the 30S subunit head. Binds mRNA in the 70S ribosome, positioning it for translation. The sequence is that of Small ribosomal subunit protein uS3 from Prochlorococcus marinus (strain MIT 9313).